The sequence spans 314 residues: DNA-directed RNA polymerase subunit alpha (314 aa).

Residues 1 to 227 form an alpha N-terminal domain (alpha-NTD) region; sequence MTKFEIECVE…ELLHPLKEIN (227 aa). Residues 241–314 form an alpha C-terminal domain (alpha-CTD) region; sequence KINQILIEEL…LPKEKTVKPN (74 aa).

Belongs to the RNA polymerase alpha chain family. In plastids the minimal PEP RNA polymerase catalytic core is composed of four subunits: alpha, beta, beta', and beta''. When a (nuclear-encoded) sigma factor is associated with the core the holoenzyme is formed, which can initiate transcription.

It is found in the plastid. Its subcellular location is the chloroplast. It catalyses the reaction RNA(n) + a ribonucleoside 5'-triphosphate = RNA(n+1) + diphosphate. DNA-dependent RNA polymerase catalyzes the transcription of DNA into RNA using the four ribonucleoside triphosphates as substrates. This chain is DNA-directed RNA polymerase subunit alpha, found in Rhodomonas salina (Cryptomonas salina).